Here is a 521-residue protein sequence, read N- to C-terminus: Fucosyltransferase 3 (521 aa).

Basic and acidic residues predominate over residues 1 to 12 (MKRGKKNSDAGD). Residues 1-29 (MKRGKKNSDAGDRLTNSDTRTGSSELNAM) form a disordered region. Topologically, residues 1 to 39 (MKRGKKNSDAGDRLTNSDTRTGSSELNAMMKPSLSSMKT) are cytoplasmic. Residues 14–26 (LTNSDTRTGSSEL) show a composition bias toward polar residues. Residues 40–60 (MGLLLAVLMVASVMFSLSVVL) form a helical; Signal-anchor for type II membrane protein membrane-spanning segment. Topologically, residues 61–521 (RDPPSDDVIE…QATLFHGCKD (461 aa)) are lumenal. N-linked (GlcNAc...) asparagine glycans are attached at residues asparagine 152, asparagine 222, and asparagine 493.

It belongs to the glycosyltransferase 37 family. Expressed in roots, stems, leaves, flowers, siliques and seedlings.

The protein resides in the golgi apparatus. It localises to the golgi stack membrane. Its pathway is protein modification; protein glycosylation. In terms of biological role, may be involved in cell wall biosynthesis. May act as a fucosyltransferase. This is Fucosyltransferase 3 (FUT3) from Arabidopsis thaliana (Mouse-ear cress).